The sequence spans 21 residues: Fibrinogen beta chain (21 aa).

Gln-1 carries the pyrrolidone carboxylic acid modification. Tyr-6 bears the Sulfotyrosine mark.

As to quaternary structure, heterohexamer; disulfide linked. Contains 2 sets of 3 non-identical chains (alpha, beta and gamma). The 2 heterotrimers are in head to head conformation with the N-termini in a small central domain. Post-translationally, conversion of fibrinogen to fibrin is triggered by thrombin, which cleaves fibrinopeptides A and B from alpha and beta chains, and thus exposes the N-terminal polymerization sites responsible for the formation of the soft clot.

The protein resides in the secreted. Its function is as follows. Cleaved by the protease thrombin to yield monomers which, together with fibrinogen alpha (FGA) and fibrinogen gamma (FGG), polymerize to form an insoluble fibrin matrix. Fibrin has a major function in hemostasis as one of the primary components of blood clots. In addition, functions during the early stages of wound repair to stabilize the lesion and guide cell migration during re-epithelialization. Was originally thought to be essential for platelet aggregation, based on in vitro studies using anticoagulated blood. However subsequent studies have shown that it is not absolutely required for thrombus formation in vivo. Enhances expression of SELP in activated platelets. Maternal fibrinogen is essential for successful pregnancy. Fibrin deposition is also associated with infection, where it protects against IFNG-mediated hemorrhage. May also facilitate the antibacterial immune response via both innate and T-cell mediated pathways. This chain is Fibrinogen beta chain (FGB), found in Rangifer tarandus (Reindeer).